The primary structure comprises 520 residues: Nonsense-mediated mRNA decay factor SMG9 (520 aa).

3 disordered regions span residues 1–94 (MSES…PAPL), 108–143 (KGPV…QRPT), and 341–360 (KPST…SDEG). At Ser-2 the chain carries N-acetylserine. 5 positions are modified to phosphoserine: Ser-2, Ser-4, Ser-7, Ser-32, and Ser-53. Positions 36 to 53 (GRERDYIAPWERERRDAS) are enriched in basic and acidic residues. Composition is skewed to pro residues over residues 78–94 (QPPP…PAPL) and 122–133 (TAPPPPAAPAPP). Positions 342-357 (PSTPSPSHESSSSSGS) are enriched in low complexity. At Ser-451 the chain carries Phosphoserine.

It belongs to the SMG9 family. Self-associates to form homodimers and forms heterodimers with SMG8; these assembly forms may represent SMG1C intermediate forms. Component of the SMG1C complex composed of SMG1, SMG8 and SMG9. Interacts with DHX34; the interaction is RNA-independent. Phosphorylated by SMG1.

Involved in nonsense-mediated decay (NMD) of mRNAs containing premature stop codons. Is recruited by release factors to stalled ribosomes together with SMG1 and SMG8 (forming the SMG1C protein kinase complex) and, in the SMG1C complex, is required for the efficient association between SMG1 and SMG8. Plays a role in brain, heart, and eye development. This chain is Nonsense-mediated mRNA decay factor SMG9, found in Homo sapiens (Human).